The sequence spans 338 residues: tRNA N6-adenosine threonylcarbamoyltransferase (338 aa).

Residues His-114 and His-118 each coordinate Fe cation. Residues 136 to 140 (LVSGG), Asp-169, Gly-182, Asp-186, and Asn-275 contribute to the substrate site. A Fe cation-binding site is contributed by Asp-301.

Belongs to the KAE1 / TsaD family. Fe(2+) is required as a cofactor.

The protein resides in the cytoplasm. The catalysed reaction is L-threonylcarbamoyladenylate + adenosine(37) in tRNA = N(6)-L-threonylcarbamoyladenosine(37) in tRNA + AMP + H(+). In terms of biological role, required for the formation of a threonylcarbamoyl group on adenosine at position 37 (t(6)A37) in tRNAs that read codons beginning with adenine. Is involved in the transfer of the threonylcarbamoyl moiety of threonylcarbamoyl-AMP (TC-AMP) to the N6 group of A37, together with TsaE and TsaB. TsaD likely plays a direct catalytic role in this reaction. In Streptococcus equi subsp. equi (strain 4047), this protein is tRNA N6-adenosine threonylcarbamoyltransferase.